The chain runs to 106 residues: Iron-sulfur cluster assembly protein CyaY (106 aa).

It belongs to the frataxin family.

Functionally, involved in iron-sulfur (Fe-S) cluster assembly. May act as a regulator of Fe-S biogenesis. This is Iron-sulfur cluster assembly protein CyaY from Colwellia psychrerythraea (strain 34H / ATCC BAA-681) (Vibrio psychroerythus).